Consider the following 293-residue polypeptide: METGTFKVKSGLAQMLKGGVIMDVTTPEQAKIAEEAGACAVMALERVPSDIRAAGGVARMADPTIIEKIMKVVSIPVMAKCRIGHFVEAQILESMGVDYIDESEVLTPADESFHVWKHDFKVPFVCGCRDLGEALRRIGEGAAMIRTKGEAGTGNIVEAVRHMRSVMGSVRRVQSMSADELSAYAKEINAPLELVLELHKTGKLPVVNFAAGGVATPADAALMMQLGADGVFVGSGIFKSSDPAAMAKAVVKAVTHYKDAKVLAEISKGLGDAMPGLDIKQIEPDKLISRRGW.

Residue Asp-23 coordinates D-ribose 5-phosphate. The Schiff-base intermediate with D-ribose 5-phosphate role is filled by Lys-80. Gly-152 is a binding site for D-ribose 5-phosphate. Arg-164 lines the D-glyceraldehyde 3-phosphate pocket. Residues Gly-213 and 234-235 (GS) each bind D-ribose 5-phosphate.

This sequence belongs to the PdxS/SNZ family. As to quaternary structure, in the presence of PdxT, forms a dodecamer of heterodimers.

The catalysed reaction is aldehydo-D-ribose 5-phosphate + D-glyceraldehyde 3-phosphate + L-glutamine = pyridoxal 5'-phosphate + L-glutamate + phosphate + 3 H2O + H(+). The protein operates within cofactor biosynthesis; pyridoxal 5'-phosphate biosynthesis. Its function is as follows. Catalyzes the formation of pyridoxal 5'-phosphate from ribose 5-phosphate (RBP), glyceraldehyde 3-phosphate (G3P) and ammonia. The ammonia is provided by the PdxT subunit. Can also use ribulose 5-phosphate and dihydroxyacetone phosphate as substrates, resulting from enzyme-catalyzed isomerization of RBP and G3P, respectively. This Dehalococcoides mccartyi (strain ATCC BAA-2266 / KCTC 15142 / 195) (Dehalococcoides ethenogenes (strain 195)) protein is Pyridoxal 5'-phosphate synthase subunit PdxS.